The primary structure comprises 268 residues: Zinc import ATP-binding protein ZnuC (268 aa).

Residues Ile-16 to Gln-231 enclose the ABC transporter domain. Gly-48–Ser-55 contacts ATP.

Belongs to the ABC transporter superfamily. Zinc importer (TC 3.A.1.15.5) family. The complex is composed of two ATP-binding proteins (ZnuC), two transmembrane proteins (ZnuB) and a solute-binding protein (ZnuA).

It localises to the cell inner membrane. The catalysed reaction is Zn(2+)(out) + ATP(in) + H2O(in) = Zn(2+)(in) + ADP(in) + phosphate(in) + H(+)(in). Functionally, part of the ABC transporter complex ZnuABC involved in zinc import. Responsible for energy coupling to the transport system. The chain is Zinc import ATP-binding protein ZnuC from Haemophilus influenzae (strain ATCC 51907 / DSM 11121 / KW20 / Rd).